The chain runs to 361 residues: MPADGIRARFRVDYAGFALDVDLTLPGHGVTALFGHSGSGKTTLLRCVAGLERAAEARLEINGELWQDSAAGVFLPTHRRALGYVFQEASLFPHLSVRRNLEYGMKRVDAASRQVSWERVLELLGIGHLLERLPGRLSGGERQRVGIARALLTSPRLLLMDEPLAALDLKRKNEILPYLERLHDELDIPMLFVSHLPDEVARLADHVVLLDQGRVTAQGSLQDIMARLDLPTAFHEDAGVVIESVVAEHDDHYHLTRLAFPGGAVLVARRPEAPGQRLRLRVHARDVSLANSRIEDSSITNVLPATVREVVEADTPAHVLVRLEAEGTPLIARITRRSCDQLGIAPGRRMWAQIKAVALLG.

The ABC transporter domain maps to 1 to 237 (MPADGIRARF…LDLPTAFHED (237 aa)). 35–42 (GHSGSGKT) is an ATP binding site. The Mop domain maps to 296–361 (DSSITNVLPA…AQIKAVALLG (66 aa)).

It belongs to the ABC transporter superfamily. Molybdate importer (TC 3.A.1.8) family. As to quaternary structure, the complex is composed of two ATP-binding proteins (ModC), two transmembrane proteins (ModB) and a solute-binding protein (ModA).

The protein resides in the cell inner membrane. The catalysed reaction is molybdate(out) + ATP + H2O = molybdate(in) + ADP + phosphate + H(+). Functionally, part of the ABC transporter complex ModABC involved in molybdenum import. Responsible for energy coupling to the transport system. This is Molybdenum import ATP-binding protein ModC 1 from Azotobacter vinelandii.